Consider the following 716-residue polypeptide: Fatty acid oxidation complex subunit alpha (716 aa).

An enoyl-CoA hydratase/isomerase region spans residues 1–189 (MIYQSPTIQV…KVGAVDSVVA (189 aa)). Residue D296 participates in substrate binding. Residues 311–716 (KEVNNAAVLG…AANNGSYYQA (406 aa)) are 3-hydroxyacyl-CoA dehydrogenase. NAD(+)-binding positions include M324, D343, 400 to 402 (VVE), K407, and S429. H450 (for 3-hydroxyacyl-CoA dehydrogenase activity) is an active-site residue. Position 453 (N453) interacts with NAD(+). Residues N500 and Y660 each coordinate substrate.

The protein in the N-terminal section; belongs to the enoyl-CoA hydratase/isomerase family. It in the C-terminal section; belongs to the 3-hydroxyacyl-CoA dehydrogenase family. Heterotetramer of two alpha chains (FadB) and two beta chains (FadA).

The catalysed reaction is a (3S)-3-hydroxyacyl-CoA + NAD(+) = a 3-oxoacyl-CoA + NADH + H(+). It catalyses the reaction a (3S)-3-hydroxyacyl-CoA = a (2E)-enoyl-CoA + H2O. It carries out the reaction a 4-saturated-(3S)-3-hydroxyacyl-CoA = a (3E)-enoyl-CoA + H2O. The enzyme catalyses (3S)-3-hydroxybutanoyl-CoA = (3R)-3-hydroxybutanoyl-CoA. The catalysed reaction is a (3Z)-enoyl-CoA = a 4-saturated (2E)-enoyl-CoA. It catalyses the reaction a (3E)-enoyl-CoA = a 4-saturated (2E)-enoyl-CoA. It participates in lipid metabolism; fatty acid beta-oxidation. Involved in the aerobic and anaerobic degradation of long-chain fatty acids via beta-oxidation cycle. Catalyzes the formation of 3-oxoacyl-CoA from enoyl-CoA via L-3-hydroxyacyl-CoA. It can also use D-3-hydroxyacyl-CoA and cis-3-enoyl-CoA as substrate. The protein is Fatty acid oxidation complex subunit alpha of Shewanella baltica (strain OS185).